A 243-amino-acid polypeptide reads, in one-letter code: Phosphoadenosine 5'-phosphosulfate reductase (243 aa).

The Nucleophile; cysteine thiosulfonate intermediate role is filled by Cys-239.

The protein belongs to the PAPS reductase family. CysH subfamily.

The protein localises to the cytoplasm. The enzyme catalyses [thioredoxin]-disulfide + sulfite + adenosine 3',5'-bisphosphate + 2 H(+) = [thioredoxin]-dithiol + 3'-phosphoadenylyl sulfate. It participates in sulfur metabolism; hydrogen sulfide biosynthesis; sulfite from sulfate: step 3/3. Functionally, catalyzes the formation of sulfite from phosphoadenosine 5'-phosphosulfate (PAPS) using thioredoxin as an electron donor. This is Phosphoadenosine 5'-phosphosulfate reductase from Erwinia tasmaniensis (strain DSM 17950 / CFBP 7177 / CIP 109463 / NCPPB 4357 / Et1/99).